Here is a 385-residue protein sequence, read N- to C-terminus: Galactokinase (385 aa).

34–37 (EHTD) provides a ligand contact to substrate. 124 to 130 (SSGLSSS) is an ATP binding site. Residues serine 130 and glutamate 162 each coordinate Mg(2+). Aspartate 174 acts as the Proton acceptor in catalysis. Substrate is bound at residue tyrosine 223.

The protein belongs to the GHMP kinase family. GalK subfamily.

It localises to the cytoplasm. It carries out the reaction alpha-D-galactose + ATP = alpha-D-galactose 1-phosphate + ADP + H(+). Its pathway is carbohydrate metabolism; galactose metabolism. Catalyzes the transfer of the gamma-phosphate of ATP to D-galactose to form alpha-D-galactose-1-phosphate (Gal-1-P). This chain is Galactokinase, found in Actinobacillus succinogenes (strain ATCC 55618 / DSM 22257 / CCUG 43843 / 130Z).